A 104-amino-acid polypeptide reads, in one-letter code: MNIVMFFFDNYMFSDFNKSSLEIACIENDIGTVKKIINLNPNLDISHCLNLAIESKNYQIVKFLLKKNISNSVLLEAYDCACINGKISIMELLIQYLNNKSIVS.

ANK repeat units lie at residues 16–43 (FNKSSLEIACIENDIGTVKKIINLNPNL), 44–73 (DISHCLNLAIESKNYQIVKFLLKKNISNSV), and 75–102 (LEAYDCACINGKISIMELLIQYLNNKSI).

The polypeptide is Putative ankyrin repeat protein L677 (Acanthamoeba polyphaga (Amoeba)).